The chain runs to 100 residues: ESAT-6-like protein EsxT (100 aa).

The protein belongs to the WXG100 family. ESAT-6 subfamily. Forms a tight 1:1 complex with EsxU.

It is found in the secreted. This chain is ESAT-6-like protein EsxT, found in Mycobacterium tuberculosis (strain CDC 1551 / Oshkosh).